We begin with the raw amino-acid sequence, 453 residues long: Glutamyl-tRNA(Gln) amidotransferase subunit A (453 aa).

Residues Lys-56 and Ser-131 each act as charge relay system in the active site. Ser-155 functions as the Acyl-ester intermediate in the catalytic mechanism.

It belongs to the amidase family. GatA subfamily. As to quaternary structure, heterotrimer of A, B and C subunits.

It catalyses the reaction L-glutamyl-tRNA(Gln) + L-glutamine + ATP + H2O = L-glutaminyl-tRNA(Gln) + L-glutamate + ADP + phosphate + H(+). Allows the formation of correctly charged Gln-tRNA(Gln) through the transamidation of misacylated Glu-tRNA(Gln) in organisms which lack glutaminyl-tRNA synthetase. The reaction takes place in the presence of glutamine and ATP through an activated gamma-phospho-Glu-tRNA(Gln). The sequence is that of Glutamyl-tRNA(Gln) amidotransferase subunit A from Campylobacter fetus subsp. fetus (strain 82-40).